Consider the following 263-residue polypeptide: Ribosomal RNA large subunit methyltransferase E (263 aa).

Residues 1–34 are disordered; it reads MSSAEGPKSGGGSKGSKSEASSRVRGSAPTGSRD. Glycine 102, tryptophan 104, aspartate 126, aspartate 142, and aspartate 166 together coordinate S-adenosyl-L-methionine. The Proton acceptor role is filled by lysine 206.

This sequence belongs to the class I-like SAM-binding methyltransferase superfamily. RNA methyltransferase RlmE family.

It is found in the cytoplasm. The enzyme catalyses uridine(2552) in 23S rRNA + S-adenosyl-L-methionine = 2'-O-methyluridine(2552) in 23S rRNA + S-adenosyl-L-homocysteine + H(+). In terms of biological role, specifically methylates the uridine in position 2552 of 23S rRNA at the 2'-O position of the ribose in the fully assembled 50S ribosomal subunit. This chain is Ribosomal RNA large subunit methyltransferase E, found in Rhodospirillum rubrum (strain ATCC 11170 / ATH 1.1.1 / DSM 467 / LMG 4362 / NCIMB 8255 / S1).